Consider the following 1793-residue polypeptide: Non-reducing polyketide synthase adaA (1793 aa).

Positions 16–250 (NDDLKALFRG…YSKSLALPVY (235 aa)) are N-terminal acylcarrier protein transacylase domain (SAT). The Ketosynthase family 3 (KS3) domain occupies 388–821 (DSKLAIVGMA…GGNTTLVLED (434 aa)). Residues cysteine 561, histidine 696, and histidine 739 each act as for beta-ketoacyl synthase activity in the active site. The segment at 923-1245 (VFTFTGQGAY…KSLCTLHLAG (323 aa)) is malonyl-CoA:ACP transacylase (MAT) domain. A product template (PT) domain region spans residues 1312-1634 (TSLIHQVTEE…RLLMDRFFSP (323 aa)). The N-terminal hotdog fold stretch occupies residues 1316 to 1452 (HQVTEETVDK…GSIKYPADPT (137 aa)). In terms of domain architecture, PKS/mFAS DH spans 1316-1629 (HQVTEETVDK…FRRVPRLLMD (314 aa)). The Proton acceptor; for dehydratase activity role is filled by histidine 1348. The interval 1482–1629 (KASTLSKPLA…FRRVPRLLMD (148 aa)) is C-terminal hotdog fold. Aspartate 1540 functions as the Proton donor; for dehydratase activity in the catalytic mechanism. The span at 1642 to 1659 (AAPAPAPAAVPAVKKQPP) shows a compositional bias: low complexity. The disordered stretch occupies residues 1642 to 1714 (AAPAPAPAAV…TTEQEAPVAD (73 aa)). Positions 1660–1681 (TETIQPQAPKTEQKQDQLQLPN) are enriched in polar residues. The span at 1683-1706 (ASAAPSTANSSSSPSSSGVATPTT) shows a compositional bias: low complexity. The Carrier domain occupies 1716–1793 (SAVTGVAGKC…DLTGWLEQYC (78 aa)). Position 1753 is an O-(pantetheine 4'-phosphoryl)serine (serine 1753).

Requires pantetheine 4'-phosphate as cofactor.

It carries out the reaction holo-[ACP] + 9 malonyl-CoA + acetyl-CoA + 9 H(+) = 3-(2,4-dioxopentyl)-3,6,8,9-tetrahydroxy-1-oxo-1,2,3,4-tetrahydroanthracene-2-carboxyl-[ACP] + 9 CO2 + 10 CoA + 2 H2O. Its pathway is secondary metabolite biosynthesis. In terms of biological role, non-reducing polyketide synthase; part of the gene cluster that mediates the biosynthesis of the linear tetracyclic TAN-1612 neuropeptide Y receptor antagonist. The decaketide backbone of TAN-1612 is synthesized by the non-reducing polyketide synthase adaA via condensation of one acetyl-CoA starter unit with 9 malonyl-CoA units. The FAD-dependent monooxygenase adaC then performs hydroxylation at C2 while the polaketide chain is still attached to the NRPKS adaA. The alpha-hydroxylation step at C2 appears to be crucial for the following C18-C1 Claisen cyclization and release of the C9-hydroxyl version of TAN-1612 from the NRPKS adaA, two steps performed by the lactamase-like protein adaB. Finally, the O-methyltransferase adaD performs the C9 O-methylation to complete the biosynthesis of TAN-1612. This chain is Non-reducing polyketide synthase adaA, found in Aspergillus niger (strain ATCC MYA-4892 / CBS 513.88 / FGSC A1513).